The chain runs to 459 residues: Putrescine aminotransferase (459 aa).

Pyridoxal 5'-phosphate-binding positions include 150–151 (GT) and glutamine 274. Residue lysine 300 is modified to N6-(pyridoxal phosphate)lysine. Threonine 332 lines the pyridoxal 5'-phosphate pocket.

It belongs to the class-III pyridoxal-phosphate-dependent aminotransferase family. Putrescine aminotransferase subfamily. It depends on pyridoxal 5'-phosphate as a cofactor.

It carries out the reaction an alkane-alpha,omega-diamine + 2-oxoglutarate = an omega-aminoaldehyde + L-glutamate. It catalyses the reaction putrescine + 2-oxoglutarate = 1-pyrroline + L-glutamate + H2O. The catalysed reaction is cadaverine + 2-oxoglutarate = 5-aminopentanal + L-glutamate. Its pathway is amine and polyamine degradation; putrescine degradation; 4-aminobutanal from putrescine (transaminase route): step 1/1. Catalyzes the aminotransferase reaction from putrescine to 2-oxoglutarate, leading to glutamate and 4-aminobutanal, which spontaneously cyclizes to form 1-pyrroline. This is the first step in one of two pathways for putrescine degradation, where putrescine is converted into 4-aminobutanoate (gamma-aminobutyrate or GABA) via 4-aminobutanal. Also functions as a cadaverine transaminase in a a L-lysine degradation pathway to succinate that proceeds via cadaverine, glutarate and L-2-hydroxyglutarate. This is Putrescine aminotransferase from Escherichia coli (strain K12 / MC4100 / BW2952).